The sequence spans 251 residues: Transcription factor bHLH144 (251 aa).

Disordered stretches follow at residues 1–20, 130–161, and 173–202; these read MQNN…NMHN, YEEN…YGNT, and NNNN…RKKM. Residues 9–18 show a composition bias toward basic and acidic residues; sequence FSDEVGDRNM. Over residues 130–147 the composition is skewed to acidic residues; the sequence is YEENDDNEGEEDGGDSEE. Polar residues predominate over residues 148 to 161; the sequence is VSTARTSSRDYGNT. A compositionally biased stretch (low complexity) spans 173 to 192; sequence NNNNNNNSRKQSLSGSASSS. A bHLH domain is found at 186 to 235; the sequence is SGSASSSNNDGKGRKKMKKMMGVLRRIVPGGEQMNTACVLDEAVQYLKSL.

As to quaternary structure, homodimer. Interacts with LHW.

The protein resides in the nucleus. The sequence is that of Transcription factor bHLH144 (BHLH144) from Arabidopsis thaliana (Mouse-ear cress).